Reading from the N-terminus, the 162-residue chain is Large ribosomal subunit protein uL15 (162 aa).

The segment covering 1 to 10 (MNLNELRDNA) has biased composition (basic and acidic residues). The tract at residues 1-39 (MNLNELRDNAGSRYRKKRLGRGIGSGKGKTSGKGVKGQK) is disordered. Positions 21 to 35 (RGIGSGKGKTSGKGV) are enriched in gly residues.

It belongs to the universal ribosomal protein uL15 family. As to quaternary structure, part of the 50S ribosomal subunit.

Its function is as follows. Binds to the 23S rRNA. The sequence is that of Large ribosomal subunit protein uL15 from Gluconacetobacter diazotrophicus (strain ATCC 49037 / DSM 5601 / CCUG 37298 / CIP 103539 / LMG 7603 / PAl5).